A 166-amino-acid polypeptide reads, in one-letter code: Putative methyltransferase Rv1506c (166 aa).

It belongs to the methyltransferase superfamily.

Functionally, probably plays a role in host phagosome maturation arrest, as well as a role in the synthesis of acyltrehalose-containing glycolipids. The chain is Putative methyltransferase Rv1506c from Mycobacterium tuberculosis (strain ATCC 25618 / H37Rv).